The primary structure comprises 400 residues: MNFEIKDTNIRKIFDSRGNFSAEVTVILENASGTASAPAGASTGKTEVIAYPDNNIDNGIDFFYRHVKKALKGFNSINQEGLDRMLHEIDGTDNFSNLGGNIATAISIANAKAVSNALGIPMYRYVGGINYSMPRPIGNVIGGGKHSKNGTTIQEFLVSAQGKTVLDSIYYNILIHRRIGEILSGMFKNQSIGLGDEKAWTCDISDEDAIEIIKNASKDISSEYKIKVLNGVDFAADSFYDGNYYIYKNRKLTRDQQIDYAISISRDHGFYYIEDPLNDQDFDGFSEITSKVGDKSLIVGDDLYTTNPERIKKGIEKRSTNGVLIKVNQIGTLSDTARSVRIATEHGLKTVVSHRSGETTDDFIAHLAVAFGSPLIKTGTIGGERLAKLNELIRIEEELI.

A (2R)-2-phosphoglycerate-binding site is contributed by glutamine 154. Catalysis depends on glutamate 197, which acts as the Proton donor. Mg(2+) is bound by residues aspartate 233, glutamate 274, and aspartate 301. Positions 326, 355, 356, and 377 each coordinate (2R)-2-phosphoglycerate. Lysine 326 functions as the Proton acceptor in the catalytic mechanism.

The protein belongs to the enolase family. Mg(2+) serves as cofactor.

The protein localises to the cytoplasm. It is found in the secreted. The protein resides in the cell surface. It catalyses the reaction (2R)-2-phosphoglycerate = phosphoenolpyruvate + H2O. It functions in the pathway carbohydrate degradation; glycolysis; pyruvate from D-glyceraldehyde 3-phosphate: step 4/5. Functionally, catalyzes the reversible conversion of 2-phosphoglycerate (2-PG) into phosphoenolpyruvate (PEP). It is essential for the degradation of carbohydrates via glycolysis. This chain is Enolase, found in Picrophilus torridus (strain ATCC 700027 / DSM 9790 / JCM 10055 / NBRC 100828 / KAW 2/3).